Here is a 382-residue protein sequence, read N- to C-terminus: Dual-specificity RNA methyltransferase RlmN (382 aa).

The Proton acceptor role is filled by glutamate 91. A Radical SAM core domain is found at 97-339; that stretch reads ETDRGTLCIS…TTVRKTRGDD (243 aa). A disulfide bond links cysteine 104 and cysteine 344. [4Fe-4S] cluster contacts are provided by cysteine 111, cysteine 115, and cysteine 118. S-adenosyl-L-methionine is bound by residues 165 to 166, serine 197, 219 to 221, and asparagine 301; these read GE and SLH. Cysteine 344 (S-methylcysteine intermediate) is an active-site residue.

This sequence belongs to the radical SAM superfamily. RlmN family. It depends on [4Fe-4S] cluster as a cofactor.

Its subcellular location is the cytoplasm. The enzyme catalyses adenosine(2503) in 23S rRNA + 2 reduced [2Fe-2S]-[ferredoxin] + 2 S-adenosyl-L-methionine = 2-methyladenosine(2503) in 23S rRNA + 5'-deoxyadenosine + L-methionine + 2 oxidized [2Fe-2S]-[ferredoxin] + S-adenosyl-L-homocysteine. The catalysed reaction is adenosine(37) in tRNA + 2 reduced [2Fe-2S]-[ferredoxin] + 2 S-adenosyl-L-methionine = 2-methyladenosine(37) in tRNA + 5'-deoxyadenosine + L-methionine + 2 oxidized [2Fe-2S]-[ferredoxin] + S-adenosyl-L-homocysteine. In terms of biological role, specifically methylates position 2 of adenine 2503 in 23S rRNA and position 2 of adenine 37 in tRNAs. m2A2503 modification seems to play a crucial role in the proofreading step occurring at the peptidyl transferase center and thus would serve to optimize ribosomal fidelity. This chain is Dual-specificity RNA methyltransferase RlmN, found in Polaromonas naphthalenivorans (strain CJ2).